The sequence spans 429 residues: C4-dicarboxylate transport protein (429 aa).

A run of 8 helical transmembrane segments spans residues 9-29 (VLYV…HYYP), 45-65 (LIKM…IAGM), 79-99 (LLYF…ATHI), 149-169 (GEIL…AHLG), 185-205 (VLFG…FGAM), 223-243 (LIGT…GAIA), 308-328 (IYMT…LTWM), and 356-376 (AATL…ILGI).

This sequence belongs to the dicarboxylate/amino acid:cation symporter (DAACS) (TC 2.A.23) family.

The protein localises to the cell inner membrane. Responsible for the transport of dicarboxylates such as succinate, fumarate, and malate from the periplasm across the membrane. In Burkholderia multivorans (strain ATCC 17616 / 249), this protein is C4-dicarboxylate transport protein.